Here is a 750-residue protein sequence, read N- to C-terminus: Methylmalonyl-CoA mutase, mitochondrial (750 aa).

The N-terminal 32 residues, 1-32 (MLRAKNQLFLLSPHYLRQVKESSGSRLIQQRL), are a transit peptide targeting the mitochondrion. Residue Gln50 participates in malonyl-CoA binding. At Lys89 the chain carries N6-acetyllysine. Residues 96–99 (YPTM) and 106–110 (TIRQY) each bind malonyl-CoA. Position 212 is an N6-acetyllysine (Lys212). Residues 216 to 218 (TIQ), Arg228, Lys255, His265, and 304 to 306 (RLS) each bind malonyl-CoA. The residue at position 335 (Lys335) is an N6-acetyllysine. The residue at position 343 (Lys343) is an N6-succinyllysine. Ser481 bears the Phosphoserine mark. Lys595 bears the N6-succinyllysine mark. Lys602 carries the post-translational modification N6-acetyllysine. Residues 614 to 746 (RPRLLVAKMG…DDIEKCLEKK (133 aa)) form the B12-binding domain. His627 contacts adenosylcob(III)alamin.

Belongs to the methylmalonyl-CoA mutase family. As to quaternary structure, homodimer. Interacts (the apoenzyme form) with MMAA; the interaction is GTP dependent. Adenosylcob(III)alamin is required as a cofactor.

It localises to the mitochondrion matrix. The protein resides in the mitochondrion. The protein localises to the cytoplasm. It carries out the reaction (R)-methylmalonyl-CoA = succinyl-CoA. During catalysis, accumulation of oxidized inactive cofactor hydroxocobalamin (OH2Cbl) leads to loss of MMUT activity. Interaction with MMAA decreases the rate of OH2Cbl formation and promotes the replacement of OH2Cbl by the active cofactor adenosylcobalamin (AdoCbl), thereby restoring MMUT activity. Inhibited by itaconyl-CoA, a metabolite that inactivates the coenzyme B12 cofactor. Inhibited at high concentration of substrate. Its function is as follows. Catalyzes the reversible isomerization of methylmalonyl-CoA (MMCoA) (generated from branched-chain amino acid metabolism and degradation of dietary odd chain fatty acids and cholesterol) to succinyl-CoA (3-carboxypropionyl-CoA), a key intermediate of the tricarboxylic acid cycle. The sequence is that of Methylmalonyl-CoA mutase, mitochondrial from Homo sapiens (Human).